Here is a 398-residue protein sequence, read N- to C-terminus: S-adenosylmethionine synthase (398 aa).

His-17 contacts ATP. Position 19 (Asp-19) interacts with Mg(2+). Glu-45 contributes to the K(+) binding site. L-methionine-binding residues include Glu-58 and Gln-101. Residues 101–111 (QSPDIAQGVDK) are flexible loop. ATP is bound by residues 176-178 (DGK), 243-244 (RF), Asp-252, 258-259 (RK), and Lys-279. Asp-252 serves as a coordination point for L-methionine. L-methionine is bound at residue Lys-283.

The protein belongs to the AdoMet synthase family. Homotetramer; dimer of dimers. Requires Mg(2+) as cofactor. K(+) is required as a cofactor.

Its subcellular location is the cytoplasm. It catalyses the reaction L-methionine + ATP + H2O = S-adenosyl-L-methionine + phosphate + diphosphate. The protein operates within amino-acid biosynthesis; S-adenosyl-L-methionine biosynthesis; S-adenosyl-L-methionine from L-methionine: step 1/1. Functionally, catalyzes the formation of S-adenosylmethionine (AdoMet) from methionine and ATP. The overall synthetic reaction is composed of two sequential steps, AdoMet formation and the subsequent tripolyphosphate hydrolysis which occurs prior to release of AdoMet from the enzyme. This Staphylococcus aureus (strain Mu3 / ATCC 700698) protein is S-adenosylmethionine synthase.